An 805-amino-acid chain; its full sequence is Phenylalanine--tRNA ligase beta subunit (805 aa).

A tRNA-binding domain is found at 39–154 (SEGLKKVVVG…DDATPGDPVF (116 aa)). In terms of domain architecture, B5 spans 410 to 485 (VQPTTVTIDL…RLYGYDNLPA (76 aa)). Mg(2+) is bound by residues aspartate 463, aspartate 469, glutamate 472, and glutamate 473. An FDX-ACB domain is found at 712–805 (SKFPSITRDV…LTDELGAEIR (94 aa)).

This sequence belongs to the phenylalanyl-tRNA synthetase beta subunit family. Type 1 subfamily. Tetramer of two alpha and two beta subunits. It depends on Mg(2+) as a cofactor.

Its subcellular location is the cytoplasm. The enzyme catalyses tRNA(Phe) + L-phenylalanine + ATP = L-phenylalanyl-tRNA(Phe) + AMP + diphosphate + H(+). The sequence is that of Phenylalanine--tRNA ligase beta subunit from Lactiplantibacillus plantarum (strain ATCC BAA-793 / NCIMB 8826 / WCFS1) (Lactobacillus plantarum).